The sequence spans 167 residues: uncharacterized protein (167 aa).

The N-terminal stretch at 1–25 is a signal peptide; it reads MPFSVTKFSLIFVALLLAEALVAQS.

This is an uncharacterized protein from Caenorhabditis elegans.